Consider the following 218-residue polypeptide: Ribonuclease HII (218 aa).

The RNase H type-2 domain maps to 24–218 (ESIAGVDEVG…KLFAVNGSLT (195 aa)). Aspartate 30, glutamate 31, and aspartate 126 together coordinate a divalent metal cation.

The protein belongs to the RNase HII family. The cofactor is Mn(2+). It depends on Mg(2+) as a cofactor.

The protein resides in the cytoplasm. It catalyses the reaction Endonucleolytic cleavage to 5'-phosphomonoester.. Functionally, endonuclease that specifically degrades the RNA of RNA-DNA hybrids. The polypeptide is Ribonuclease HII (Prochlorococcus marinus (strain MIT 9313)).